A 663-amino-acid chain; its full sequence is UvrABC system protein B (663 aa).

Residues 31 to 271 (DNIEGGEKAQ…EQSISKIQAE (241 aa)) enclose the Helicase ATP-binding domain. An ATP-binding site is contributed by 44-51 (GATGTGKT). Residues 97–120 (YYDYYQPEAYVPSSDTYIEKDSSV) carry the Beta-hairpin motif. A Helicase C-terminal domain is found at 435–601 (QMDDLLGEIN…TIKKDIRDLI (167 aa)). The UVR domain maps to 627–662 (QEAIKQLQKNMQEAAELLDFELAAQLRDLILELKAM).

Belongs to the UvrB family. In terms of assembly, forms a heterotetramer with UvrA during the search for lesions. Interacts with UvrC in an incision complex.

The protein resides in the cytoplasm. The UvrABC repair system catalyzes the recognition and processing of DNA lesions. A damage recognition complex composed of 2 UvrA and 2 UvrB subunits scans DNA for abnormalities. Upon binding of the UvrA(2)B(2) complex to a putative damaged site, the DNA wraps around one UvrB monomer. DNA wrap is dependent on ATP binding by UvrB and probably causes local melting of the DNA helix, facilitating insertion of UvrB beta-hairpin between the DNA strands. Then UvrB probes one DNA strand for the presence of a lesion. If a lesion is found the UvrA subunits dissociate and the UvrB-DNA preincision complex is formed. This complex is subsequently bound by UvrC and the second UvrB is released. If no lesion is found, the DNA wraps around the other UvrB subunit that will check the other stand for damage. The chain is UvrABC system protein B from Streptococcus equi subsp. zooepidemicus (strain H70).